Consider the following 203-residue polypeptide: METLSQDSLLECQICFNYYSPRRRPKLLDCKHTCCSVCLQQMRTSQKDVRCPWCRGVTKLPPGFSVSQLPDDPEVLAVIAIPHTSEHTPVFIKLPSNGCYMLPLPISKERALLPGDMGCRLLPGSQQKSVTVVTIPAEQQPLQGGAPQEAVEEEQDRRGVVKSSTWSGVCTVILVACVLVFLLGIVLHNMSCISKRFTVISCG.

The RING-type zinc-finger motif lies at 12–55 (CQICFNYYSPRRRPKLLDCKHTCCSVCLQQMRTSQKDVRCPWCR). Positions 106 to 165 (ISKERALLPGDMGCRLLPGSQQKSVTVVTIPAEQQPLQGGAPQEAVEEEQDRRGVVKSST) are necessary for interaction with RRAGA. A helical membrane pass occupies residues 167–187 (SGVCTVILVACVLVFLLGIVL).

Belongs to the RNF152 family. Interacts with RRAGA (inactive GDP-bound form); stimulated by amino acid starvation. Interacts with SEC16A. Ubiquitinated. Autoubiquitinated in vitro, leading to its degradation by the proteasome. In terms of tissue distribution, widely expressed.

It localises to the lysosome membrane. The enzyme catalyses S-ubiquitinyl-[E2 ubiquitin-conjugating enzyme]-L-cysteine + [acceptor protein]-L-lysine = [E2 ubiquitin-conjugating enzyme]-L-cysteine + N(6)-ubiquitinyl-[acceptor protein]-L-lysine.. The protein operates within protein modification; protein ubiquitination. Its function is as follows. E3 ubiquitin-protein ligase that acts as a negative regulator of mTORC1 signaling by mediating ubiquitination of RagA/RRAGA and RHEB. Catalyzes 'Lys-63'-linked polyubiquitination of RagA/RRAGA in response to amino acid starvation, thereby regulating mTORC1 signaling. Also mediates monoubiquitination of RHEB, promoting its association with the TSC-TBC complex and subsequent inhibition. Also mediates 'Lys-48'-linked polyubiquitination of target proteins and their subsequent targeting to the proteasome for degradation. Induces apoptosis when overexpressed. This Homo sapiens (Human) protein is E3 ubiquitin-protein ligase RNF152.